We begin with the raw amino-acid sequence, 192 residues long: dCTP deaminase, dUMP-forming (192 aa).

DCTP is bound by residues 101-106 (KSSLGR), D119, 127-129 (TLE), Q148, Y162, and Q174. The active-site Proton donor/acceptor is the E129. A disordered region spans residues 171–192 (YQGQRGPTPSRSWQSWHTWPTR).

It belongs to the dCTP deaminase family. As to quaternary structure, homotrimer.

The catalysed reaction is dCTP + 2 H2O = dUMP + NH4(+) + diphosphate. The protein operates within pyrimidine metabolism; dUMP biosynthesis; dUMP from dCTP: step 1/1. Bifunctional enzyme that catalyzes both the deamination of dCTP to dUTP and the hydrolysis of dUTP to dUMP without releasing the toxic dUTP intermediate. This is dCTP deaminase, dUMP-forming from Salinispora arenicola (strain CNS-205).